Here is a 283-residue protein sequence, read N- to C-terminus: Nucleoid occlusion protein (283 aa).

The H-T-H motif DNA-binding region spans 142 to 161 (ESLAQRLGKGQSTIANKLRL).

It belongs to the ParB family.

It localises to the cytoplasm. Its subcellular location is the nucleoid. In terms of biological role, effects nucleoid occlusion by binding relatively nonspecifically to DNA and preventing the assembly of the division machinery in the vicinity of the nucleoid, especially under conditions that disturb the cell cycle. It helps to coordinate cell division and chromosome segregation by preventing the formation of the Z ring through the nucleoid, which would cause chromosome breakage. The chain is Nucleoid occlusion protein from Shouchella clausii (strain KSM-K16) (Alkalihalobacillus clausii).